The following is a 1493-amino-acid chain: MDRKGKGKQVAGSDSYSGGQKRKNSVEFRDEGLRIKKRKNPEVLQFFEESAEVGYYGGSSDEDDDGLGFLNDMEDEPEVEESSKAGKGEKGKSSFVFPKEEDLNEEEFDRIMEERYKPGSGFLRYADDDIKDAIEMDALAPTSKDPPIWKVKCAIGRERRSVFCLMHKFVELRKIGTKLEIISVFSVDHVKGFIFIEADKEHDVLEACKSLVGIYATRMVLLPKAETPNLLTVQKKTKKVSEGTWARVKNGKYKGDLAQIVAVSDTRNKALIKLIPRIDIQALTQKYGGGVTVQKGQTPAPRLISSSELEEFRPLIQVRRDRDTGITFEHLDSLMLKDGYLYKKVSLDSISSWGVIPTKDELLKFTPVDRKETGDVEWISEIYGEERKKKILPTCREGGKGEGSGGGKGEGSGGGKGEGSRGGKGEGSSDFKSESSYELYNLVCFSRKDFGLIVGVDDKGDGYKVLKEGIDGPVVVTVGKKEMQNGPFDSKFTALDLNKKQISVNDVVKISKGPSEGKQGVVRQVYRGIIFLYDESEEENGGYFCCKSQSCEKVKLFTEESNEKTGGFDGTAFEDFVSSPKSPLSPEKEWQPRERYNSSNQGDIGSTYSIGQKLRIRVGPLKGYLCRVIALRYSDVTVKLDSQHKIFTVKSEHLAEVRDRNTVLSTSGDAGTGSFQPFGMLGTESSTGDWAIGAGTSSEGGNWNIGGPSTDSHESLNIERNMVQLCREKNPWGGSKPTSDVSPTVADDNTSAWANAAAENKPASASDQPGGWNPWGKTPASEAGTVSGWGDTSASNVEASSWEKQGASTSNVADLGSWGTHGGSSGGNKQDEDSVWGKLCEASESSQKKEESSWGKKGGSDGESSWGNKDGNSSASKKDGVSWGQQDKGSDESKGGSAWSNQCGDFGSGKKKDGSSGWNKSAEDSNANSKGVPDWGQPNDGSSWGKKGDGAASWGKKDDGGSWGKKDDGNKDDGGSSWGKKDDGQKDDGGSSWEKKFDGGSSWGKKDDGGSSWGKKDDGGSLWGKKDDGGSSWGKEDDGGSLWGKKDDGESSWGKKDDGESSWGKKDDGGSSWGKKDEGGYSEQTFDRGGRGFGGRRGGGRRGGRDQFGRGSSFGNSEDPAPWSKPSGGSSWGKQDGDGGGSSWGKENDAGGGSSWGKQDNGVGSSWGKQNDGSGGGSSWGKQNDAGGGSSWGKQDSGGDGSSWGKQDGGGDSGSAWGKQNNTSGGSSWGKQSDAGGGSSWGKQDGGGGGSSWGKQDGGGGSGSAWGKQNETSNGSSWGKQNDSGGGSSWGKQDGGGGGSSWGKQNDGGGGSSWGKQGDGGSKPWNEHSGGGRGFGERRGGGGFRGGRNQSGRGGRSFDGGRSSSWKTDNQENTWKSDQSGGSDWKKGWGEDSNNSKPSGSSAGGCAGNWPSWDTNSKKETNDKPGDDSKSAWGTSNDQVNTDNNNDSWNKKPNNDVGTSGEADNAWGGKTNAVAPSPSGSAAWGTGDKKTGW.

Disordered stretches follow at residues 1–34 (MDRK…EGLR) and 54–96 (GYYG…SSFV). Positions 21–28 (KRKNSVEF) match the Nuclear localization signal motif. Over residues 24–34 (NSVEFRDEGLR) the composition is skewed to basic and acidic residues. Over residues 60 to 80 (SDEDDDGLGFLNDMEDEPEVE) the composition is skewed to acidic residues. Residues 81–92 (ESSKAGKGEKGK) show a composition bias toward basic and acidic residues. The 28-residue stretch at 239-266 (KVSEGTWARVKNGKYKGDLAQIVAVSDT) folds into the KOW 1 domain. A disordered region spans residues 393–432 (PTCREGGKGEGSGGGKGEGSGGGKGEGSRGGKGEGSSDFK). Gly residues predominate over residues 401-417 (GEGSGGGKGEGSGGGKG). The span at 418–432 (EGSRGGKGEGSSDFK) shows a compositional bias: basic and acidic residues. Residues 501-528 (QISVNDVVKISKGPSEGKQGVVRQVYRG) form the KOW 2 domain. Residues 578–602 (SSPKSPLSPEKEWQPRERYNSSNQG) form a disordered region. The span at 586 to 596 (PEKEWQPRERY) shows a compositional bias: basic and acidic residues. In terms of domain architecture, KOW 3 spans 607 to 634 (TYSIGQKLRIRVGPLKGYLCRVIALRYS). Disordered regions lie at residues 692 to 711 (IGAG…PSTD), 728 to 747 (EKNP…TVAD), and 757 to 1493 (AAEN…KTGW). The stretch at 732-741 (WGGSKPTSDV) is repeat 1. A 42 X 9 AA approximate WG/GW-rich tandem repeats region spans residues 732 to 1493 (WGGSKPTSDV…WGTGDKKTGW (762 aa)). Over residues 757-767 (AAENKPASASD) the composition is skewed to low complexity. 37 repeat units span residues 775-784 (WGKTPASEAG), 789-797 (WGDTSASNV), 818-827 (WGTHGGSSGG), 836-845 (WGKLCEASES), 854-863 (WGKKGGSDGE), 866-875 (WGNKDGNSSA), 883-892 (WGQQDKGSDE), 917-926 (GWNKSAEDSN), 935-943 (WGQPNDGSS), 944-953 (WGKKGDGAAS), 954-962 (WGKKDDGGS), 963-972 (WGKKDDGNKD), 978-987 (WGKKDDGQKD), 1003-1012 (WGKKDDGGSS), 1013-1022 (WGKKDDGGSL), 1023-1032 (WGKKDDGGSS), 1033-1042 (WGKEDDGGSL), 1043-1052 (WGKKDDGESS), 1053-1062 (WGKKDDGESS), 1063-1072 (WGKKDDGGSS), 1073-1082 (WGKKDEGGYS), 1132-1141 (WGKQDGDGGG), 1144-1153 (WGKENDAGGG), 1156-1165 (WGKQDNGVGS), 1167-1176 (WGKQNDGSGG), 1180-1189 (WGKQNDAGGG), 1192-1201 (WGKQDSGGDG), 1204-1213 (WGKQDGGGDS), 1217-1226 (WGKQNNTSGG), 1229-1238 (WGKQSDAGGG), 1241-1250 (WGKQDGGGGG), 1253-1262 (WGKQDGGGGS), 1266-1275 (WGKQNETSNG), 1278-1287 (WGKQNDSGGG), 1290-1299 (WGKQDGGGGG), 1302-1311 (WGKQNDGGGG), and 1314-1323 (WGKQGDGGSK). The span at 790–812 (GDTSASNVEASSWEKQGASTSNV) shows a compositional bias: polar residues. Residues 846-860 (SQKKEESSWGKKGGS) show a composition bias toward basic and acidic residues. Polar residues predominate over residues 866 to 875 (WGNKDGNSSA). Positions 955-1090 (GKKDDGGSWG…YSEQTFDRGG (136 aa)) are enriched in basic and acidic residues. The span at 1122-1134 (PWSKPSGGSSWGK) shows a compositional bias: low complexity. Over residues 1156-1172 (WGKQDNGVGSSWGKQND) the composition is skewed to polar residues. Gly residues predominate over residues 1186-1213 (AGGGSSWGKQDSGGDGSSWGKQDGGGDS). The span at 1218–1231 (GKQNNTSGGSSWGK) shows a compositional bias: polar residues. Residues 1235-1264 (AGGGSSWGKQDGGGGGSSWGKQDGGGGSGS) show a composition bias toward gly residues. Polar residues predominate over residues 1270 to 1283 (NETSNGSSWGKQND). Over residues 1284–1321 (SGGGSSWGKQDGGGGGSSWGKQNDGGGGSSWGKQGDGG) the composition is skewed to gly residues. 2 stretches are compositionally biased toward polar residues: residues 1366-1382 (WKTD…QSGG) and 1392-1401 (DSNNSKPSGS). The stretch at 1389 to 1398 (WGEDSNNSKP) is repeat 39. The segment covering 1416–1430 (NSKKETNDKPGDDSK) has biased composition (basic and acidic residues). Residues 1432–1442 (AWGTSNDQVNT) are compositionally biased toward polar residues. 3 tandem repeats follow at residues 1433–1442 (WGTSNDQVNT), 1467–1475 (WGGKTNAVA), and 1484–1493 (WGTGDKKTGW).

Interacts with AGO4 via its C-terminal region and with RNA transcripts. Binds chromatin at loci subject to transcriptional silencing downstream of RNA Polymerase V, but independently from the presence of 24-nt siRNA.

Its subcellular location is the nucleus. It is found in the nucleoplasm. Functionally, effector of RNA-directed DNA methylation (RdDM) triggered by small interfering RNAs (siRNAs, 24-nt RNAs). Functions as an adapter protein that binds scaffold transcripts generated by polymerase V and recruits AGO4 and AGO4-bound siRNAs to form an RdDM effector complex. Promotes the expression of 24-nt RNAs. Required for the initial establishment of DNA methylation. Together with AGO4, required for transcriptional gene silencing (TGS) by DNA methylation and repressive histone modifications (H3K9me2) of several chromatin loci. The polypeptide is Protein RNA-directed DNA methylation 3 (Arabidopsis thaliana (Mouse-ear cress)).